A 961-amino-acid polypeptide reads, in one-letter code: Gamma-tubulin small complex component GCP2 (961 aa).

The segment at 15-76 (NLHRSPKLAT…KPSIPPLKSE (62 aa)) is disordered. Residues 43–54 (LGSNVVSHPTRS) are compositionally biased toward polar residues. Basic and acidic residues predominate over residues 55–65 (SPEKTTDKPAD).

The protein belongs to the TUBGCP family. As to quaternary structure, component of the gamma-tubulin small complex (gamma-TuSC) composed of tubulin gamma chain, gamma-tubulin complex protein 2 (GCP2) and gamma-tubulin complex protein 3 (GCP3). Interacts with tubulin gamma chain.

The protein resides in the cytoplasm. It localises to the cytoskeleton. Its subcellular location is the flagellum axoneme. It is found in the flagellum basal body. Component of the gamma-tubulin small complex (gamma-TuSC) involved in microtubule (MT) nucleation for the formation of median bodies and in the biogenesis of flagella. Gamma-TuSC may be required for the correct positioning of EB1 within the trophozoites. This chain is Gamma-tubulin small complex component GCP2, found in Giardia intestinalis (strain ATCC 50803 / WB clone C6) (Giardia lamblia).